The primary structure comprises 136 residues: Large ribosomal subunit protein uL16 (136 aa).

The protein belongs to the universal ribosomal protein uL16 family. In terms of assembly, part of the 50S ribosomal subunit.

In terms of biological role, binds 23S rRNA and is also seen to make contacts with the A and possibly P site tRNAs. In Psychromonas ingrahamii (strain DSM 17664 / CCUG 51855 / 37), this protein is Large ribosomal subunit protein uL16.